A 670-amino-acid polypeptide reads, in one-letter code: Sodium, potassium, lithium and rubidium/H(+) antiporter (670 aa).

The next 11 membrane-spanning stretches (helical) occupy residues leucine 5–isoleucine 27, glycine 46–phenylalanine 66, proline 83–isoleucine 103, tryptophan 105–threonine 125, alanine 156–leucine 176, serine 182–isoleucine 202, phenylalanine 228–glycine 248, isoleucine 276–valine 296, tyrosine 314–tryptophan 334, leucine 355–proline 375, and leucine 389–leucine 409.

The protein belongs to the monovalent cation:proton antiporter 1 (CPA1) transporter (TC 2.A.36) family. Nhak (TC 2.A.36.3.2) subfamily.

The protein resides in the cell membrane. Transporter involved in the efflux of sodium, potassium, lithium and rubidium. This chain is Sodium, potassium, lithium and rubidium/H(+) antiporter (nhaK), found in Bacillus subtilis (strain 168).